Reading from the N-terminus, the 311-residue chain is HPr kinase/phosphorylase (311 aa).

Catalysis depends on residues His139 and Lys160. ATP is bound at residue 154–161 (GASGVGKS). Residue Ser161 participates in Mg(2+) binding. The active-site Proton acceptor; for phosphorylation activity. Proton donor; for dephosphorylation activity is the Asp178. The segment at 202–211 (LEIRGIGIID) is important for the catalytic mechanism of both phosphorylation and dephosphorylation. A Mg(2+)-binding site is contributed by Glu203. Residue Arg244 is part of the active site. The important for the catalytic mechanism of dephosphorylation stretch occupies residues 265-270 (PVRPGR).

It belongs to the HPrK/P family. As to quaternary structure, homohexamer. It depends on Mg(2+) as a cofactor.

It carries out the reaction [HPr protein]-L-serine + ATP = [HPr protein]-O-phospho-L-serine + ADP + H(+). The enzyme catalyses [HPr protein]-O-phospho-L-serine + phosphate + H(+) = [HPr protein]-L-serine + diphosphate. In terms of biological role, catalyzes the ATP- as well as the pyrophosphate-dependent phosphorylation of a specific serine residue in HPr, a phosphocarrier protein of the phosphoenolpyruvate-dependent sugar phosphotransferase system (PTS). HprK/P also catalyzes the pyrophosphate-producing, inorganic phosphate-dependent dephosphorylation (phosphorolysis) of seryl-phosphorylated HPr (P-Ser-HPr). The two antagonistic activities of HprK/P are regulated by several intracellular metabolites, which change their concentration in response to the absence or presence of rapidly metabolisable carbon sources (glucose, fructose, etc.) in the growth medium. Therefore, by controlling the phosphorylation state of HPr, HPrK/P is a sensor enzyme that plays a major role in the regulation of carbon metabolism and sugar transport: it mediates carbon catabolite repression (CCR), and regulates PTS-catalyzed carbohydrate uptake and inducer exclusion. In Exiguobacterium sibiricum (strain DSM 17290 / CCUG 55495 / CIP 109462 / JCM 13490 / 255-15), this protein is HPr kinase/phosphorylase.